Here is a 281-residue protein sequence, read N- to C-terminus: 2-dehydro-3-deoxyphosphooctonate aldolase (281 aa).

The protein belongs to the KdsA family.

The protein localises to the cytoplasm. The catalysed reaction is D-arabinose 5-phosphate + phosphoenolpyruvate + H2O = 3-deoxy-alpha-D-manno-2-octulosonate-8-phosphate + phosphate. Its pathway is carbohydrate biosynthesis; 3-deoxy-D-manno-octulosonate biosynthesis; 3-deoxy-D-manno-octulosonate from D-ribulose 5-phosphate: step 2/3. The protein operates within bacterial outer membrane biogenesis; lipopolysaccharide biosynthesis. This Acidithiobacillus ferrooxidans (strain ATCC 23270 / DSM 14882 / CIP 104768 / NCIMB 8455) (Ferrobacillus ferrooxidans (strain ATCC 23270)) protein is 2-dehydro-3-deoxyphosphooctonate aldolase.